The chain runs to 266 residues: Cytosolic Fe-S cluster assembly factor Nubp2 homolog (266 aa).

14-21 (GKGGVGKS) contacts ATP. Positions 188 and 191 each coordinate [4Fe-4S] cluster.

Belongs to the Mrp/NBP35 ATP-binding proteins family. Nubp2/CFD1 subfamily. As to quaternary structure, heterotetramer of 2 Nubp1 and 2 Nubp2 chains. [4Fe-4S] cluster is required as a cofactor.

The protein localises to the cytoplasm. In terms of biological role, component of the cytosolic iron-sulfur (Fe/S) protein assembly (CIA) machinery. Required for maturation of extramitochondrial Fe-S proteins. The Nubp1-Nubp2 heterotetramer forms a Fe-S scaffold complex, mediating the de novo assembly of an Fe-S cluster and its transfer to target apoproteins. The chain is Cytosolic Fe-S cluster assembly factor Nubp2 homolog from Drosophila virilis (Fruit fly).